The sequence spans 49 residues: Large ribosomal subunit protein bL33 (49 aa).

The protein belongs to the bacterial ribosomal protein bL33 family.

This is Large ribosomal subunit protein bL33 from Syntrophomonas wolfei subsp. wolfei (strain DSM 2245B / Goettingen).